We begin with the raw amino-acid sequence, 1706 residues long: Cadherin-99C (1706 aa).

The first 28 residues, 1-28 (MAARNSLTPQQGLGFFGLLILLCSAVLG), serve as a signal peptide directing secretion. Residues 29–1395 (KSQMCEVETG…AIDNEVFPFT (1367 aa)) are Extracellular-facing. Cadherin domains follow at residues 68–142 (DPDT…APRF), 143–264 (MNTP…DPSF), 277–387 (INPE…PPVI), 388–500 (SSSQ…APKL), 519–604 (VTQV…PPRF), 605–704 (QKPI…NPEF), 707–807 (STLP…VPKF), 808–908 (SDAR…PPRF), 909–1005 (ITVP…RVDV), 1038–1148 (SDDS…APEF), and 1156–1270 (QQDT…ALSF). 2 N-linked (GlcNAc...) asparagine glycosylation sites follow: Asn105 and Asn188. 4 N-linked (GlcNAc...) asparagine glycosylation sites follow: Asn442, Asn553, Asn620, and Asn753. Asn1053, Asn1088, and Asn1108 each carry an N-linked (GlcNAc...) asparagine glycan. N-linked (GlcNAc...) asparagine glycans are attached at residues Asn1311 and Asn1367. The helical transmembrane segment at 1396–1416 (LIAISLVILILGTIGIIYICI) threads the bilayer. The Cytoplasmic segment spans residues 1417–1706 (SWSKYKNFKQ…RSEVETTTEL (290 aa)).

As to quaternary structure, interacts (via the cytoplasmic domain) with ck. Interacts (via the cytoplasmic domain) with Cul1 and Ubr3.

It is found in the apical cell membrane. The protein localises to the endosome membrane. It localises to the cell projection. The protein resides in the microvillus membrane. Cadherin that functions in epithelial morphogenesis and the intestine epithelial immune response. Essential for female fertility. Regulates the length and organization of apical microvilli in developing follicle cells and salivary glands. Function in the follicle cell is essential for egg development as the microvilli secrete eggshell material such as the vitelline membrane. Acts at least in part by regulating the recruitment of the myosin ck to the follicle cell microvilli. Also required to regulate cell rearrangements during salivary tube elongation, possibly by modulating cellular adhesion between the apical surface and apical extracellular matrix during epithelial tube elongation. May also function in cellular adhesion during the development of other tubular epithelia such as the trachea. Possibly functions as an apical membrane determinant which acts in apical membrane expansion during salivary and tracheal epithelial tube elongation. In salivary gland development, this function is independent of the other apical membrane determinants crb and sas. Essential downstream component of a hh-signaling pathway which regulates the Duox-dependent gut epithelial immune response to bacterial uracil; required for endosome formation in the enterocyte and activating norpA-dependent Ca2+ mobilization, which are essential steps in the Duox-dependent production of reactive oxygen species (ROS) in response to intestinal bacterial infection. The chain is Cadherin-99C from Drosophila melanogaster (Fruit fly).